A 44-amino-acid chain; its full sequence is Photosystem I reaction center subunit IX (44 aa).

A helical transmembrane segment spans residues 7–27 (YLSTAPVLTTLWFGSLAGLLI).

This sequence belongs to the PsaJ family.

Its subcellular location is the plastid. The protein localises to the chloroplast thylakoid membrane. Functionally, may help in the organization of the PsaE and PsaF subunits. The chain is Photosystem I reaction center subunit IX from Phalaenopsis aphrodite subsp. formosana (Moth orchid).